The primary structure comprises 222 residues: Cytidylate kinase (222 aa).

ATP is bound at residue 10–18 (GPAGAGKST).

It belongs to the cytidylate kinase family. Type 1 subfamily.

The protein resides in the cytoplasm. It catalyses the reaction CMP + ATP = CDP + ADP. The catalysed reaction is dCMP + ATP = dCDP + ADP. The chain is Cytidylate kinase from Halalkalibacterium halodurans (strain ATCC BAA-125 / DSM 18197 / FERM 7344 / JCM 9153 / C-125) (Bacillus halodurans).